The following is a 792-amino-acid chain: Phenylalanine--tRNA ligase beta subunit (792 aa).

The 112-residue stretch at 39-150 folds into the tRNA-binding domain; that stretch reads APAFHKVVVA…PDAPVGTDFR (112 aa). The 76-residue stretch at 405-480 folds into the B5 domain; that stretch reads PARDPIRLGL…RMYGYNRIAA (76 aa). 4 residues coordinate Mg(2+): D458, D464, E467, and E468. One can recognise an FDX-ACB domain in the interval 698–791; it reads SKYPPIRRDI…LENRFGARLR (94 aa).

The protein belongs to the phenylalanyl-tRNA synthetase beta subunit family. Type 1 subfamily. Tetramer of two alpha and two beta subunits. Requires Mg(2+) as cofactor.

Its subcellular location is the cytoplasm. It catalyses the reaction tRNA(Phe) + L-phenylalanine + ATP = L-phenylalanyl-tRNA(Phe) + AMP + diphosphate + H(+). The chain is Phenylalanine--tRNA ligase beta subunit from Nitrosospira multiformis (strain ATCC 25196 / NCIMB 11849 / C 71).